We begin with the raw amino-acid sequence, 534 residues long: CTP synthase (534 aa).

Residues M1–L269 form an amidoligase domain region. S17 is a CTP binding site. A UTP-binding site is contributed by S17. An ATP-binding site is contributed by S18–V23. Residue Y58 coordinates L-glutamine. D75 contacts ATP. Positions 75 and 143 each coordinate Mg(2+). CTP contacts are provided by residues D150–E152, K190–Q195, and K226. UTP contacts are provided by residues K190–Q195 and K226. The Glutamine amidotransferase type-1 domain occupies D294–E532. Residue G352 participates in L-glutamine binding. C379 functions as the Nucleophile; for glutamine hydrolysis in the catalytic mechanism. Residues L380–Q383, E403, and R460 each bind L-glutamine. Catalysis depends on residues H505 and E507.

Belongs to the CTP synthase family. In terms of assembly, homotetramer.

It catalyses the reaction UTP + L-glutamine + ATP + H2O = CTP + L-glutamate + ADP + phosphate + 2 H(+). The catalysed reaction is L-glutamine + H2O = L-glutamate + NH4(+). It carries out the reaction UTP + NH4(+) + ATP = CTP + ADP + phosphate + 2 H(+). Its pathway is pyrimidine metabolism; CTP biosynthesis via de novo pathway; CTP from UDP: step 2/2. Allosterically activated by GTP, when glutamine is the substrate; GTP has no effect on the reaction when ammonia is the substrate. The allosteric effector GTP functions by stabilizing the protein conformation that binds the tetrahedral intermediate(s) formed during glutamine hydrolysis. Inhibited by the product CTP, via allosteric rather than competitive inhibition. Functionally, catalyzes the ATP-dependent amination of UTP to CTP with either L-glutamine or ammonia as the source of nitrogen. Regulates intracellular CTP levels through interactions with the four ribonucleotide triphosphates. In Hydrogenobaculum sp. (strain Y04AAS1), this protein is CTP synthase.